Here is a 482-residue protein sequence, read N- to C-terminus: Signal recognition particle protein (482 aa).

GTP-binding positions include Gly-107 to Thr-114, Asp-189 to Arg-193, and Thr-247 to Asp-250. Disordered stretches follow at residues Met-380–Ser-413 and Phe-452–Leu-482. The span at Phe-452 to Gly-468 shows a compositional bias: gly residues. The span at Lys-469–Leu-482 shows a compositional bias: basic residues.

The protein belongs to the GTP-binding SRP family. SRP54 subfamily. As to quaternary structure, part of the signal recognition particle protein translocation system, which is composed of SRP and FtsY.

It localises to the cytoplasm. It carries out the reaction GTP + H2O = GDP + phosphate + H(+). In terms of biological role, involved in targeting and insertion of nascent membrane proteins into the cytoplasmic membrane. Binds to the hydrophobic signal sequence of the ribosome-nascent chain (RNC) as it emerges from the ribosomes. The SRP-RNC complex is then targeted to the cytoplasmic membrane where it interacts with the SRP receptor FtsY. This is Signal recognition particle protein from Synechocystis sp. (strain ATCC 27184 / PCC 6803 / Kazusa).